The primary structure comprises 754 residues: Endoribonuclease Dicer-like (754 aa).

One can recognise a PAZ domain in the interval 132 to 251; it reads QLMCDAKRLS…LPPELCLLLP (120 aa). RNase III domains lie at 298-418 and 613-734; these read FAIT…TGPN and AQTV…LACG. E336, D404, E407, E649, D720, and E723 together coordinate Mn(2+).

Homodimer. The cofactor is Mg(2+). Requires Mn(2+) as cofactor.

Involved in cleaving double-stranded RNA in the RNA interference (RNAi) pathway. It produces 21 to 23 bp dsRNAs (siRNAs) which target the selective destruction of homologous RNAs. This chain is Endoribonuclease Dicer-like, found in Giardia intestinalis (strain ATCC 50803 / WB clone C6) (Giardia lamblia).